Consider the following 771-residue polypeptide: Endoplasmin homolog (771 aa).

Positions 1 to 24 (MANSSLLRVVLVALLLLGSVTVSA) are cleaved as a signal peptide. ATP contacts are provided by Asn-63, Asp-109, and Phe-160. Asn-63 carries N-linked (GlcNAc...) asparagine glycosylation. Residues 253 to 282 (TAATPEPAAEEGSLDEGAVEEDPDKEGDTQ) form a disordered region. Positions 260–277 (AAEEGSLDEGAVEEDPDK) are enriched in acidic residues. Residues Asn-306 and Asn-402 are each glycosylated (N-linked (GlcNAc...) asparagine). The tract at residues 727–771 (ADDSLLPPDDAEYTVSDTEAEEEEEQPKVDANADEEAEAVGEDDL) is disordered. Positions 758 to 771 (NADEEAEAVGEDDL) are enriched in acidic residues. The short motif at 768–771 (EDDL) is the Prevents secretion from ER element.

This sequence belongs to the heat shock protein 90 family. In terms of assembly, homotetramer.

The protein localises to the endoplasmic reticulum. Molecular chaperone that functions in the processing and transport of secreted proteins. Required for the synthesis of lipophosphoglycan (LPG), a cell surface glycoconjugate. Necessary for the attachment of the galactosyl residue to the mannose within the phosphoglycan repeats of the nascent LPG chain. Also required for addition of phosphoglycan to acid phosphatase. Not required for normal growth. Has ATPase activity. Binds heparin with micromolar affinity which may facilitate infection of host cells. This Leishmania infantum protein is Endoplasmin homolog.